We begin with the raw amino-acid sequence, 242 residues long: Prosalusin (242 aa).

The signal sequence occupies residues 1-26; the sequence is MAAATRGCRPWGSLLGLLGLVSAAAA. Residues 27 to 189 constitute a propeptide that is removed on maturation; that stretch reads AWDLASLRCT…SSWVVYGTNY (163 aa). 93-100 serves as a coordination point for ATP; the sequence is GWTGTGKS. Asn149 carries an N-linked (GlcNAc...) asparagine glycan. Residues 210–242 are disordered; that stretch reads PPRRSGALPPAPAAPRPALRAQRAGPAGPGAKG. Residues 225-235 are compositionally biased toward low complexity; the sequence is RPALRAQRAGP. Residue Lys241 is modified to Lysine amide.

Belongs to the ClpA/ClpB family. Torsin subfamily. Post-translationally, amidation of salusin-alpha(29-Gly) by peptidylglycine alpha-amidating monooxygenase, PAM, converts Lys-241-Gly-242 to Lys-241-NH2 and gives raise to salusin-alpha. As to expression, isoform 4 is ubiquitously expressed, with high level in vascular endothelial cells and vascular smooth muscle cells.

It is found in the secreted. Salusins -alpha and -beta may be endocrine and/or paracrine factors able to increase intracellular calcium concentrations and induce cell mitogenesis. Salusins may also be potent hypotensive peptides. This is Prosalusin (TOR2A) from Homo sapiens (Human).